Here is a 443-residue protein sequence, read N- to C-terminus: Tubulin beta chain (443 aa).

8 residues coordinate GTP: Q11, E69, S138, G142, T143, G144, N204, and N226. Residue E69 participates in Mg(2+) binding. A disordered region spans residues 424 to 443; the sequence is QYQDATAEEEGEFEEEEGEN. Residues 429-443 show a composition bias toward acidic residues; the sequence is TAEEEGEFEEEEGEN.

It belongs to the tubulin family. In terms of assembly, dimer of alpha and beta chains. A typical microtubule is a hollow water-filled tube with an outer diameter of 25 nm and an inner diameter of 15 nM. Alpha-beta heterodimers associate head-to-tail to form protofilaments running lengthwise along the microtubule wall with the beta-tubulin subunit facing the microtubule plus end conferring a structural polarity. Microtubules usually have 13 protofilaments but different protofilament numbers can be found in some organisms and specialized cells. The cofactor is Mg(2+).

The protein resides in the cytoplasm. The protein localises to the cytoskeleton. In terms of biological role, tubulin is the major constituent of microtubules, a cylinder consisting of laterally associated linear protofilaments composed of alpha- and beta-tubulin heterodimers. Microtubules grow by the addition of GTP-tubulin dimers to the microtubule end, where a stabilizing cap forms. Below the cap, tubulin dimers are in GDP-bound state, owing to GTPase activity of alpha-tubulin. The polypeptide is Tubulin beta chain (BETA-TT1) (Tetrahymena pyriformis).